The following is a 198-amino-acid chain: ATP-dependent Clp protease proteolytic subunit 1 (198 aa).

S96 functions as the Nucleophile in the catalytic mechanism. H121 is an active-site residue.

This sequence belongs to the peptidase S14 family. Fourteen ClpP subunits assemble into 2 heptameric rings which stack back to back to give a disk-like structure with a central cavity, resembling the structure of eukaryotic proteasomes.

The protein resides in the cytoplasm. It catalyses the reaction Hydrolysis of proteins to small peptides in the presence of ATP and magnesium. alpha-casein is the usual test substrate. In the absence of ATP, only oligopeptides shorter than five residues are hydrolyzed (such as succinyl-Leu-Tyr-|-NHMec, and Leu-Tyr-Leu-|-Tyr-Trp, in which cleavage of the -Tyr-|-Leu- and -Tyr-|-Trp bonds also occurs).. Its function is as follows. Cleaves peptides in various proteins in a process that requires ATP hydrolysis. Has a chymotrypsin-like activity. Plays a major role in the degradation of misfolded proteins. This chain is ATP-dependent Clp protease proteolytic subunit 1, found in Synechocystis sp. (strain ATCC 27184 / PCC 6803 / Kazusa).